Reading from the N-terminus, the 147-residue chain is Lysozyme C-1 (147 aa).

Residues 1–18 form the signal peptide; the sequence is MKALIILGFLFLSVAVQG. The 129-residue stretch at 19-147 folds into the C-type lysozyme domain; it reads KVFERCELAR…VSSYVEGCTL (129 aa). Intrachain disulfides connect cysteine 24-cysteine 145, cysteine 48-cysteine 133, cysteine 83-cysteine 99, and cysteine 95-cysteine 113. Active-site residues include glutamate 53 and aspartate 71.

It belongs to the glycosyl hydrolase 22 family. As to quaternary structure, monomer. As to expression, stomach-specific.

The enzyme catalyses Hydrolysis of (1-&gt;4)-beta-linkages between N-acetylmuramic acid and N-acetyl-D-glucosamine residues in a peptidoglycan and between N-acetyl-D-glucosamine residues in chitodextrins.. In terms of biological role, lysozymes have primarily a bacteriolytic function; those in tissues and body fluids are associated with the monocyte-macrophage system and enhance the activity of immunoagents. The sequence is that of Lysozyme C-1 (LYZ1) from Bos taurus (Bovine).